The chain runs to 227 residues: NAD(P)H-hydrate epimerase (227 aa).

Residues 10–227 (MRALETAAFN…GKIMVQYIGL (218 aa)) enclose the YjeF N-terminal domain. Position 62 to 66 (62 to 66 (NNGGD)) interacts with (6S)-NADPHX. Residues Asn63 and Asp142 each coordinate K(+). (6S)-NADPHX-binding positions include 146 to 152 (GIGLNRP) and Asp176. Ser179 is a binding site for K(+).

The protein belongs to the NnrE/AIBP family. K(+) serves as cofactor.

The enzyme catalyses (6R)-NADHX = (6S)-NADHX. It catalyses the reaction (6R)-NADPHX = (6S)-NADPHX. Functionally, catalyzes the epimerization of the S- and R-forms of NAD(P)HX, a damaged form of NAD(P)H that is a result of enzymatic or heat-dependent hydration. This is a prerequisite for the S-specific NAD(P)H-hydrate dehydratase to allow the repair of both epimers of NAD(P)HX. This chain is NAD(P)H-hydrate epimerase, found in Roseobacter litoralis (strain ATCC 49566 / DSM 6996 / JCM 21268 / NBRC 15278 / OCh 149).